The following is a 648-amino-acid chain: Bifunctional protein TilS/HprT (648 aa).

Residue 29–34 (SGGPDS) participates in ATP binding. D627 contributes to the Mg(2+) binding site.

This sequence in the N-terminal section; belongs to the tRNA(Ile)-lysidine synthase family. In the C-terminal section; belongs to the purine/pyrimidine phosphoribosyltransferase family. Requires Mg(2+) as cofactor.

Its subcellular location is the cytoplasm. It catalyses the reaction IMP + diphosphate = hypoxanthine + 5-phospho-alpha-D-ribose 1-diphosphate. It carries out the reaction GMP + diphosphate = guanine + 5-phospho-alpha-D-ribose 1-diphosphate. The enzyme catalyses cytidine(34) in tRNA(Ile2) + L-lysine + ATP = lysidine(34) in tRNA(Ile2) + AMP + diphosphate + H(+). Its function is as follows. Ligates lysine onto the cytidine present at position 34 of the AUA codon-specific tRNA(Ile) that contains the anticodon CAU, in an ATP-dependent manner. Cytidine is converted to lysidine, thus changing the amino acid specificity of the tRNA from methionine to isoleucine. The sequence is that of Bifunctional protein TilS/HprT (tilS/hprT) from Listeria monocytogenes serotype 4b (strain F2365).